The sequence spans 711 residues: Polyribonucleotide nucleotidyltransferase (711 aa).

Mg(2+) is bound by residues Asp489 and Asp495. The KH domain occupies 556–615 (PRIHTIKISPDKIKDVIGKGGSVIRALTEETGTTIEIEDDGTVKIAATDGEKAKHAIRRI). Residues 625–693 (GRIYNGKVTR…RQGRVRLSIK (69 aa)) enclose the S1 motif domain.

It belongs to the polyribonucleotide nucleotidyltransferase family. Component of the RNA degradosome, which is a multiprotein complex involved in RNA processing and mRNA degradation. Mg(2+) is required as a cofactor.

The protein localises to the cytoplasm. The enzyme catalyses RNA(n+1) + phosphate = RNA(n) + a ribonucleoside 5'-diphosphate. Functionally, involved in mRNA degradation. Catalyzes the phosphorolysis of single-stranded polyribonucleotides processively in the 3'- to 5'-direction. This chain is Polyribonucleotide nucleotidyltransferase, found in Cronobacter sakazakii (strain ATCC BAA-894) (Enterobacter sakazakii).